Reading from the N-terminus, the 638-residue chain is 1,4-alpha-glucan branching enzyme GlgB (638 aa).

Asp303 acts as the Nucleophile in catalysis. The Proton donor role is filled by Glu356.

It belongs to the glycosyl hydrolase 13 family. GlgB subfamily. Monomer.

The enzyme catalyses Transfers a segment of a (1-&gt;4)-alpha-D-glucan chain to a primary hydroxy group in a similar glucan chain.. Its pathway is glycan biosynthesis; glycogen biosynthesis. In terms of biological role, catalyzes the formation of the alpha-1,6-glucosidic linkages in glycogen by scission of a 1,4-alpha-linked oligosaccharide from growing alpha-1,4-glucan chains and the subsequent attachment of the oligosaccharide to the alpha-1,6 position. This chain is 1,4-alpha-glucan branching enzyme GlgB, found in Lactobacillus acidophilus (strain ATCC 700396 / NCK56 / N2 / NCFM).